The sequence spans 539 residues: Putative dimethylaniline monooxygenase [N-oxide-forming] 6 (539 aa).

FAD is bound by residues 9-13 (GAGVS), Glu-32, 40-41 (LW), and 61-62 (NS). 195-198 (SGSD) is a binding site for NADP(+). A helical membrane pass occupies residues 518 to 538 (FYNLLKMLSFPLLLLAVTLTF).

It belongs to the FMO family. The cofactor is FAD.

Its subcellular location is the microsome membrane. The protein localises to the endoplasmic reticulum membrane. It carries out the reaction N,N-dimethylaniline + NADPH + O2 + H(+) = N,N-dimethylaniline N-oxide + NADP(+) + H2O. It is probable that this protein is only produced in very small quantity or not at all as the gene coding for it seems to be unable to produce full-length transcripts. This chain is Putative dimethylaniline monooxygenase [N-oxide-forming] 6 (FMO6P), found in Homo sapiens (Human).